The following is a 316-amino-acid chain: Tetrahydromethanopterin S-methyltransferase subunit H (316 aa).

The protein belongs to the MtrH family. The complex is composed of 8 subunits; MtrA, MtrB, MtrC, MtrD, MtrE, MtrF, MtrG and MtrH.

The catalysed reaction is 5-methyl-5,6,7,8-tetrahydromethanopterin + coenzyme M + 2 Na(+)(in) = 5,6,7,8-tetrahydromethanopterin + methyl-coenzyme M + 2 Na(+)(out). Its pathway is one-carbon metabolism; methanogenesis from CO(2); methyl-coenzyme M from 5,10-methylene-5,6,7,8-tetrahydromethanopterin: step 2/2. Part of a complex that catalyzes the formation of methyl-coenzyme M and tetrahydromethanopterin from coenzyme M and methyl-tetrahydromethanopterin. This is an energy-conserving, sodium-ion translocating step. MtrH catalyzes the transfer of the methyl group from methyl-tetrahydromethanopterin to the corrinoid prosthetic group of MtrA. This Methanosarcina acetivorans (strain ATCC 35395 / DSM 2834 / JCM 12185 / C2A) protein is Tetrahydromethanopterin S-methyltransferase subunit H.